The primary structure comprises 141 residues: MAMTVHCDIVSAEGEIFSGLVEMVIAHGNLGDIGIAPGHAPLITDLKPGPIRLIKQGGEAEVFYISGGFLEVQPNMVKVLADTVQRAADLDEASAQAAVLAAEKALNEKGADFDYGSATARLAEAAAQLRTVQQIRKKFGG.

Belongs to the ATPase epsilon chain family. As to quaternary structure, F-type ATPases have 2 components, CF(1) - the catalytic core - and CF(0) - the membrane proton channel. CF(1) has five subunits: alpha(3), beta(3), gamma(1), delta(1), epsilon(1). CF(0) has three main subunits: a, b and c.

Its subcellular location is the cell inner membrane. Functionally, produces ATP from ADP in the presence of a proton gradient across the membrane. This Pseudomonas syringae pv. syringae (strain B728a) protein is ATP synthase epsilon chain.